A 305-amino-acid polypeptide reads, in one-letter code: Glutaminase (305 aa).

Residues Ser-61, Asn-113, Glu-158, Asn-165, Tyr-189, Tyr-241, and Val-259 each coordinate substrate.

It belongs to the glutaminase family. In terms of assembly, homotetramer.

The enzyme catalyses L-glutamine + H2O = L-glutamate + NH4(+). The polypeptide is Glutaminase (Clostridium botulinum (strain Loch Maree / Type A3)).